Consider the following 216-residue polypeptide: Ribosomal RNA small subunit methyltransferase G (216 aa).

S-adenosyl-L-methionine contacts are provided by residues glycine 81, leucine 86, 132-133, and arginine 147; that span reads VE.

It belongs to the methyltransferase superfamily. RNA methyltransferase RsmG family.

The protein localises to the cytoplasm. The catalysed reaction is guanosine(527) in 16S rRNA + S-adenosyl-L-methionine = N(7)-methylguanosine(527) in 16S rRNA + S-adenosyl-L-homocysteine. Its function is as follows. Specifically methylates the N7 position of guanine in position 527 of 16S rRNA. In Hydrogenovibrio crunogenus (strain DSM 25203 / XCL-2) (Thiomicrospira crunogena), this protein is Ribosomal RNA small subunit methyltransferase G.